The primary structure comprises 201 residues: Guanylate kinase (201 aa).

Positions 2 to 180 (SCLFVISAPS…AARDVASIVQ (179 aa)) constitute a Guanylate kinase-like domain. 9–16 (APSGAGKT) is a binding site for ATP.

The protein belongs to the guanylate kinase family.

Its subcellular location is the cytoplasm. The enzyme catalyses GMP + ATP = GDP + ADP. Functionally, essential for recycling GMP and indirectly, cGMP. This chain is Guanylate kinase, found in Nitrosomonas europaea (strain ATCC 19718 / CIP 103999 / KCTC 2705 / NBRC 14298).